We begin with the raw amino-acid sequence, 442 residues long: tRNA modification GTPase MnmE (442 aa).

Residues Arg-22, Glu-79, and Lys-118 each contribute to the (6S)-5-formyl-5,6,7,8-tetrahydrofolate site. The TrmE-type G domain occupies 215–365 (EIPIAIVGRP…LEKAILFEYQ (151 aa)). Asn-225 is a binding site for K(+). Residues 225–230 (NVGKSS), 244–250 (TNIEGTT), and 269–272 (DTAG) each bind GTP. Ser-229 lines the Mg(2+) pocket. K(+) is bound by residues Thr-244, Ile-246, and Thr-249. Position 250 (Thr-250) interacts with Mg(2+). Residue Lys-442 participates in (6S)-5-formyl-5,6,7,8-tetrahydrofolate binding.

Belongs to the TRAFAC class TrmE-Era-EngA-EngB-Septin-like GTPase superfamily. TrmE GTPase family. As to quaternary structure, homodimer. Heterotetramer of two MnmE and two MnmG subunits. The cofactor is K(+).

The protein resides in the cytoplasm. In terms of biological role, exhibits a very high intrinsic GTPase hydrolysis rate. Involved in the addition of a carboxymethylaminomethyl (cmnm) group at the wobble position (U34) of certain tRNAs, forming tRNA-cmnm(5)s(2)U34. In Mycoplasmopsis pulmonis (strain UAB CTIP) (Mycoplasma pulmonis), this protein is tRNA modification GTPase MnmE.